The following is a 273-amino-acid chain: 4-hydroxy-tetrahydrodipicolinate reductase (273 aa).

Gly-11–Met-16 is an NAD(+) binding site. Residue Arg-37 participates in NADP(+) binding. NAD(+) is bound by residues Gly-100 to Thr-102 and Ala-124 to Tyr-127. His-157 functions as the Proton donor/acceptor in the catalytic mechanism. His-158 contacts (S)-2,3,4,5-tetrahydrodipicolinate. The Proton donor role is filled by Lys-161. A (S)-2,3,4,5-tetrahydrodipicolinate-binding site is contributed by Gly-167–Thr-168.

This sequence belongs to the DapB family.

It is found in the cytoplasm. The enzyme catalyses (S)-2,3,4,5-tetrahydrodipicolinate + NAD(+) + H2O = (2S,4S)-4-hydroxy-2,3,4,5-tetrahydrodipicolinate + NADH + H(+). It catalyses the reaction (S)-2,3,4,5-tetrahydrodipicolinate + NADP(+) + H2O = (2S,4S)-4-hydroxy-2,3,4,5-tetrahydrodipicolinate + NADPH + H(+). Its pathway is amino-acid biosynthesis; L-lysine biosynthesis via DAP pathway; (S)-tetrahydrodipicolinate from L-aspartate: step 4/4. In terms of biological role, catalyzes the conversion of 4-hydroxy-tetrahydrodipicolinate (HTPA) to tetrahydrodipicolinate. This Acinetobacter baumannii (strain AB307-0294) protein is 4-hydroxy-tetrahydrodipicolinate reductase.